A 270-amino-acid chain; its full sequence is MSSNELVDQIMAQVIARVATPEQQAIPENNPPTRETAMAEKSCSLTEFVGTAIGDTVGLVIANVDSALLDAMKLEKRYRSIGILGARTGAGPHIMAADEAVKATNTEVVSIELPRDTKGGAGHGSLIILGGNDVSDVKRGIEVALKELDRTFGDVYANEAGHIEMQYTARASYALEKAFGAPIGRACGVIVGAPASVGVLMADTALKSANVEVVAYSSPAHGTSFSNEAILVISGDSGAVRQAVISAREIGKTVLGTLGSEPKNDRPSYI.

BMC circularly permuted domains follow at residues 47–152 (EFVG…DRTF) and 154–262 (DVYA…GSEP).

This sequence belongs to the EutL/PduB family. As to quaternary structure, homotrimerizes to form a pseudohexamer with a central pore. The trimers pack into an array. Both forms interact with shell protein PduA. In terms of processing, in purified BMCs seen as a 30.0 kDa and 25.0 kDa form; the smaller form is called PduB'.

The protein localises to the bacterial microcompartment. Its pathway is polyol metabolism; 1,2-propanediol degradation. Functionally, the two proteins produced are among the major shell proteins of the bacterial microcompartment (BMC) shell dedicated to 1,2-propanediol (1,2-PD) degradation. Overexpression of the gene gives large amorphous intracellular structures; when only PduB is overexpressed large circular bodies are observed which contain concentric rings, whereas with PduB' overexpression internal bodies with regular straight-lined structures were generated. The N-terminus of the long form (PduB) is required for correct formation of BMCs. May play a major role in binding the enzyme contents to the shell. Expression of a cosmid containing the full 21-gene pdu operon in E.coli allows E.coli to grow on 1,2-propanediol (1,2-PD) with the appearance of BMCs in its cytoplasm. Its function is as follows. The 1,2-PD-specific bacterial microcompartment (BMC) concentrates low levels of 1,2-PD catabolic enzymes, concentrates volatile reaction intermediates thus enhancing pathway flux and keeps the level of toxic, mutagenic propionaldehyde low. The protein is Bacterial microcompartment shell protein PduB of Citrobacter freundii.